Consider the following 120-residue polypeptide: uncharacterized protein (120 aa).

The 114-residue stretch at 7 to 120 (VFAKIITKNL…KLIGLINNND (114 aa)) folds into the HIT domain. The Histidine triad motif signature appears at 101-105 (HFHFH).

This is an uncharacterized protein from Rickettsia prowazekii (strain Madrid E).